Consider the following 553-residue polypeptide: CTP synthase (553 aa).

The segment at 1-266 (MTKNYIFITG…DNYICEYFKL (266 aa)) is amidoligase domain. Residue Ser-14 participates in CTP binding. Ser-14 is a UTP binding site. ATP contacts are provided by residues 15–20 (SLGKGI) and Asp-72. Asp-72 and Glu-140 together coordinate Mg(2+). Residues 147–149 (DIE), 187–192 (KTKPTQ), and Lys-223 contribute to the CTP site. UTP contacts are provided by residues 187 to 192 (KTKPTQ) and Lys-223. Residue 239–241 (KDV) coordinates ATP. Residues 291–544 (IIGIIGKYIK…IKSAKKNKKN (254 aa)) enclose the Glutamine amidotransferase type-1 domain. Gly-352 is a binding site for L-glutamine. Cys-379 functions as the Nucleophile; for glutamine hydrolysis in the catalytic mechanism. L-glutamine-binding positions include 380–383 (LGMQ), Glu-403, and Arg-472. Catalysis depends on residues His-517 and Glu-519.

The protein belongs to the CTP synthase family. Homotetramer.

It catalyses the reaction UTP + L-glutamine + ATP + H2O = CTP + L-glutamate + ADP + phosphate + 2 H(+). The catalysed reaction is L-glutamine + H2O = L-glutamate + NH4(+). It carries out the reaction UTP + NH4(+) + ATP = CTP + ADP + phosphate + 2 H(+). Its pathway is pyrimidine metabolism; CTP biosynthesis via de novo pathway; CTP from UDP: step 2/2. Its activity is regulated as follows. Allosterically activated by GTP, when glutamine is the substrate; GTP has no effect on the reaction when ammonia is the substrate. The allosteric effector GTP functions by stabilizing the protein conformation that binds the tetrahedral intermediate(s) formed during glutamine hydrolysis. Inhibited by the product CTP, via allosteric rather than competitive inhibition. Functionally, catalyzes the ATP-dependent amination of UTP to CTP with either L-glutamine or ammonia as the source of nitrogen. Regulates intracellular CTP levels through interactions with the four ribonucleotide triphosphates. This is CTP synthase from Buchnera aphidicola subsp. Schizaphis graminum (strain Sg).